The primary structure comprises 975 residues: Ubiquitin C-terminal hydrolase 15 (975 aa).

8 residues coordinate Zn(2+): cysteine 88, cysteine 91, cysteine 99, cysteine 102, cysteine 108, cysteine 112, histidine 121, and cysteine 125. The segment at 88–125 adopts an MYND-type zinc-finger fold; it reads CATCHGPAKTRCSRCKSVRYCSGKCQIIHWRQGHKQTC. The disordered stretch occupies residues 301–378; sequence EGPYASAAES…STKTAVSTNS (78 aa). The segment covering 309–322 has biased composition (polar residues); it reads ESLQRSNSSGNVTG. Positions 354 to 369 are enriched in basic and acidic residues; the sequence is YDGHEKNPHNKNEQRS. Residues 441-747 form the USP domain; it reads RGLFNCGNSC…GAYMLFYMRS (307 aa). Cysteine 450 (nucleophile) is an active-site residue. Histidine 706 functions as the Proton acceptor in the catalytic mechanism. The interval 764–783 is disordered; that stretch reads PTCSKRHSSKSSKGSKQDLN.

Belongs to the peptidase C19 family. Highly expressed in young panicles. Expressed in roots, leaf blades, leaf sheaths and stems. Expressed at low levels in brown grains.

The protein resides in the cytoplasm. The protein localises to the nucleus. The catalysed reaction is Thiol-dependent hydrolysis of ester, thioester, amide, peptide and isopeptide bonds formed by the C-terminal Gly of ubiquitin (a 76-residue protein attached to proteins as an intracellular targeting signal).. Functionally, recognizes and hydrolyzes the peptide bond at the C-terminal Gly of ubiquitin. Involved in the processing of poly-ubiquitin precursors as well as that of ubiquitinated proteins. Involved in the regulation of grain size. Acts as positive regulator of grain width and size by influencing cell proliferation. Functions partially antagonistically with GW2 in the regulation of grain width. Possesses deubiquitinating enzyme activity in vitro. This Oryza sativa subsp. japonica (Rice) protein is Ubiquitin C-terminal hydrolase 15.